The chain runs to 333 residues: Lipoyl synthase (333 aa).

Cys55, Cys60, Cys66, Cys81, Cys85, Cys88, and Ser292 together coordinate [4Fe-4S] cluster. Residues Trp67–Ala281 enclose the Radical SAM core domain.

Belongs to the radical SAM superfamily. Lipoyl synthase family. [4Fe-4S] cluster is required as a cofactor.

The protein resides in the cytoplasm. It carries out the reaction [[Fe-S] cluster scaffold protein carrying a second [4Fe-4S](2+) cluster] + N(6)-octanoyl-L-lysyl-[protein] + 2 oxidized [2Fe-2S]-[ferredoxin] + 2 S-adenosyl-L-methionine + 4 H(+) = [[Fe-S] cluster scaffold protein] + N(6)-[(R)-dihydrolipoyl]-L-lysyl-[protein] + 4 Fe(3+) + 2 hydrogen sulfide + 2 5'-deoxyadenosine + 2 L-methionine + 2 reduced [2Fe-2S]-[ferredoxin]. The protein operates within protein modification; protein lipoylation via endogenous pathway; protein N(6)-(lipoyl)lysine from octanoyl-[acyl-carrier-protein]: step 2/2. In terms of biological role, catalyzes the radical-mediated insertion of two sulfur atoms into the C-6 and C-8 positions of the octanoyl moiety bound to the lipoyl domains of lipoate-dependent enzymes, thereby converting the octanoylated domains into lipoylated derivatives. The polypeptide is Lipoyl synthase (Kineococcus radiotolerans (strain ATCC BAA-149 / DSM 14245 / SRS30216)).